A 616-amino-acid polypeptide reads, in one-letter code: Chaperone protein HscA (616 aa).

This sequence belongs to the heat shock protein 70 family.

In terms of biological role, chaperone involved in the maturation of iron-sulfur cluster-containing proteins. Has a low intrinsic ATPase activity which is markedly stimulated by HscB. Involved in the maturation of IscU. In Escherichia coli (strain SMS-3-5 / SECEC), this protein is Chaperone protein HscA.